Consider the following 413-residue polypeptide: Multidrug resistance protein MdtA (413 aa).

The first 20 residues, 1 to 20 (MKGSNTFRWAIAIGVVVAAA), serve as a signal peptide directing secretion. Disordered stretches follow at residues 31-57 (SPTA…RDGP) and 391-413 (EPQT…GARA). Low complexity predominate over residues 32–49 (PTAAPGVAAQAQHTAAAG). Positions 397-413 (ADEKSPSRHEGQKGARA) are enriched in basic and acidic residues.

This sequence belongs to the membrane fusion protein (MFP) (TC 8.A.1) family. Part of a tripartite efflux system composed of MdtA, MdtB and MdtC.

The protein localises to the cell inner membrane. This chain is Multidrug resistance protein MdtA, found in Salmonella typhi.